Consider the following 581-residue polypeptide: Proline--tRNA ligase (581 aa).

The protein belongs to the class-II aminoacyl-tRNA synthetase family. ProS type 1 subfamily. Homodimer.

It is found in the cytoplasm. It catalyses the reaction tRNA(Pro) + L-proline + ATP = L-prolyl-tRNA(Pro) + AMP + diphosphate. Functionally, catalyzes the attachment of proline to tRNA(Pro) in a two-step reaction: proline is first activated by ATP to form Pro-AMP and then transferred to the acceptor end of tRNA(Pro). As ProRS can inadvertently accommodate and process non-cognate amino acids such as alanine and cysteine, to avoid such errors it has two additional distinct editing activities against alanine. One activity is designated as 'pretransfer' editing and involves the tRNA(Pro)-independent hydrolysis of activated Ala-AMP. The other activity is designated 'posttransfer' editing and involves deacylation of mischarged Ala-tRNA(Pro). The misacylated Cys-tRNA(Pro) is not edited by ProRS. This chain is Proline--tRNA ligase, found in Variovorax paradoxus (strain S110).